The sequence spans 262 residues: Small ribosomal subunit protein uS2 (262 aa).

Belongs to the universal ribosomal protein uS2 family.

The polypeptide is Small ribosomal subunit protein uS2 (Roseiflexus sp. (strain RS-1)).